The sequence spans 1273 residues: Clustered mitochondria protein homolog (1273 aa).

The region spanning 344-599 (PANNADYSRM…NTYPLDVKFA (256 aa)) is the Clu domain. TPR repeat units lie at residues 981–1013 (SDQKWAEGSMLLNEDQNAALTLFAQAIAIKEEV), 1022–1055 (AEKYLTLSTVYSKLGLTPEAVAFCRKSCAIYERV), and 1151–1184 (ATLESRIGNLYASINDFHNAMEHISKTPRIFTRE). Disordered regions lie at residues 1217-1242 (AEQASVNSGSRKKNVNQKADAPKAEL) and 1254-1273 (IEGGSTEKSKKKSSKKKGKK). The segment covering 1262–1273 (SKKKSSKKKGKK) has biased composition (basic residues).

Belongs to the CLU family. May associate with the eukaryotic translation initiation factor 3 (eIF-3) complex.

The protein localises to the cytoplasm. In terms of biological role, mRNA-binding protein involved in proper cytoplasmic distribution of mitochondria. This chain is Clustered mitochondria protein homolog, found in Vanderwaltozyma polyspora (strain ATCC 22028 / DSM 70294 / BCRC 21397 / CBS 2163 / NBRC 10782 / NRRL Y-8283 / UCD 57-17) (Kluyveromyces polysporus).